We begin with the raw amino-acid sequence, 328 residues long: DNA-directed RNA polymerase subunit alpha (328 aa).

Residues 1–231 are alpha N-terminal domain (alpha-NTD); the sequence is MIYQMQMPER…EHVSLFANFS (231 aa). Positions 252-328 are alpha C-terminal domain (alpha-CTD); it reads MRKLLQTRIE…MDITKYQMKS (77 aa).

This sequence belongs to the RNA polymerase alpha chain family. In terms of assembly, homodimer. The RNAP catalytic core consists of 2 alpha, 1 beta, 1 beta' and 1 omega subunit. When a sigma factor is associated with the core the holoenzyme is formed, which can initiate transcription.

The enzyme catalyses RNA(n) + a ribonucleoside 5'-triphosphate = RNA(n+1) + diphosphate. In terms of biological role, DNA-dependent RNA polymerase catalyzes the transcription of DNA into RNA using the four ribonucleoside triphosphates as substrates. In Prosthecochloris aestuarii (strain DSM 271 / SK 413), this protein is DNA-directed RNA polymerase subunit alpha.